We begin with the raw amino-acid sequence, 612 residues long: Threonine--tRNA ligase (612 aa).

Residues 218 to 509 (NHRKLGVELG…LSEHFGGNFP (292 aa)) are catalytic. C310, H361, and H486 together coordinate Zn(2+).

The protein belongs to the class-II aminoacyl-tRNA synthetase family. Homodimer. The cofactor is Zn(2+).

Its subcellular location is the cytoplasm. It catalyses the reaction tRNA(Thr) + L-threonine + ATP = L-threonyl-tRNA(Thr) + AMP + diphosphate + H(+). Functionally, catalyzes the attachment of threonine to tRNA(Thr) in a two-step reaction: L-threonine is first activated by ATP to form Thr-AMP and then transferred to the acceptor end of tRNA(Thr). Also edits incorrectly charged L-seryl-tRNA(Thr). The polypeptide is Threonine--tRNA ligase (Helicobacter pylori (strain Shi470)).